The sequence spans 150 residues: Transcription antitermination protein NusB (150 aa).

It belongs to the NusB family.

Its function is as follows. Involved in transcription antitermination. Required for transcription of ribosomal RNA (rRNA) genes. Binds specifically to the boxA antiterminator sequence of the ribosomal RNA (rrn) operons. This Chloroflexus aggregans (strain MD-66 / DSM 9485) protein is Transcription antitermination protein NusB.